Reading from the N-terminus, the 199-residue chain is Hematopoietic prostaglandin D synthase (199 aa).

The region spanning 2 to 79 (PNYKLTYFNM…YLTKNTDLAG (78 aa)) is the GST N-terminal domain. Glutathione is bound by residues Tyr-8, Arg-14, Trp-39, 49–51 (GKI), and 63–64 (QS). The region spanning 81 to 199 (TEMEQCHVDA…WIKRRPQTKL (119 aa)) is the GST C-terminal domain.

Belongs to the GST superfamily. Sigma family. In terms of assembly, homodimer. It depends on glutathione as a cofactor. Expressed in a number of megakaryocytic cell lines but not in platelets. Highly expressed in adipose tissue, macrophages and placenta. Also expressed at lower levels in lung, heart, lymph nodes, appendix, bone marrow and fetal liver.

Its subcellular location is the cytoplasm. It carries out the reaction prostaglandin H2 = prostaglandin D2. It catalyses the reaction RX + glutathione = an S-substituted glutathione + a halide anion + H(+). The enzyme catalyses 2-glyceryl-prostaglandin H2 = 2-glyceryl-prostaglandin D2. Its activity is regulated as follows. Prostaglandin PGD2 synthesis is stimulated by calcium and magnesium ions. One calcium or magnesium ion is bound between the subunits of the homodimer. The interactions with the protein are for the most part mediated via water molecules. Magnesium increases the affinity for glutathione, while calcium has no effect on the affinity for glutathione. Its function is as follows. Bifunctional enzyme which catalyzes both the conversion of PGH2 to PGD2, a prostaglandin involved in smooth muscle contraction/relaxation and a potent inhibitor of platelet aggregation, and the conjugation of glutathione with a wide range of aryl halides and organic isothiocyanates. Also exhibits low glutathione-peroxidase activity towards cumene hydroperoxide. The protein is Hematopoietic prostaglandin D synthase of Homo sapiens (Human).